We begin with the raw amino-acid sequence, 390 residues long: MLQFELLATDPASHARRGTLTLNHGVVQTPIFMPVGTYGTVKGVMPRSLHEMGAQIILSNTFHLWMRPGLDVMQSFGGLHGFEQWNKPILTDSGGFQVWSLGAMRKITEEGVHFASPVNGDKLFMSPEVSMQIQTVLNSDIVMQLDECTPYETKGHKTTEAEARKSMEMSLRWARRSQDEFHRLGNPNALFGIVQGGMYKNLRQESLERLVEMDFPGYAVGGVSVGEPKDEMLDIMAHTPHRLPAHKPRYLMGVGTPEDLVQGVADGVDMFDCVMPTRNARNGTIFTRFGDLKIRNARHKADHQPLDPTCTCHACAGTEGVAWADGGRGGFSRAYLHHLDRCGEMLGPMLTTVHNLHYYLNLMREIRESLDAGRFGEFRARFAADRAQGV.

The active-site Proton acceptor is the aspartate 92. Substrate contacts are provided by residues 92–96 (DSGGF), aspartate 146, glutamine 195, and glycine 222. Residues 253 to 259 (GVGTPED) are RNA binding. Residue aspartate 272 is the Nucleophile of the active site. The interval 277-281 (TRNAR) is RNA binding; important for wobble base 34 recognition. Zn(2+)-binding residues include cysteine 310, cysteine 312, cysteine 315, and histidine 354.

Belongs to the queuine tRNA-ribosyltransferase family. As to quaternary structure, homodimer. Within each dimer, one monomer is responsible for RNA recognition and catalysis, while the other monomer binds to the replacement base PreQ1. It depends on Zn(2+) as a cofactor.

The enzyme catalyses 7-aminomethyl-7-carbaguanine + guanosine(34) in tRNA = 7-aminomethyl-7-carbaguanosine(34) in tRNA + guanine. Its pathway is tRNA modification; tRNA-queuosine biosynthesis. In terms of biological role, catalyzes the base-exchange of a guanine (G) residue with the queuine precursor 7-aminomethyl-7-deazaguanine (PreQ1) at position 34 (anticodon wobble position) in tRNAs with GU(N) anticodons (tRNA-Asp, -Asn, -His and -Tyr). Catalysis occurs through a double-displacement mechanism. The nucleophile active site attacks the C1' of nucleotide 34 to detach the guanine base from the RNA, forming a covalent enzyme-RNA intermediate. The proton acceptor active site deprotonates the incoming PreQ1, allowing a nucleophilic attack on the C1' of the ribose to form the product. After dissociation, two additional enzymatic reactions on the tRNA convert PreQ1 to queuine (Q), resulting in the hypermodified nucleoside queuosine (7-(((4,5-cis-dihydroxy-2-cyclopenten-1-yl)amino)methyl)-7-deazaguanosine). In Paracidovorax citrulli (strain AAC00-1) (Acidovorax citrulli), this protein is Queuine tRNA-ribosyltransferase.